The chain runs to 617 residues: Dihydroxy-acid dehydratase (617 aa).

Mg(2+) is bound at residue Asp-81. Position 122 (Cys-122) interacts with [2Fe-2S] cluster. 2 residues coordinate Mg(2+): Asp-123 and Lys-124. Lys-124 bears the N6-carboxylysine mark. Cys-195 provides a ligand contact to [2Fe-2S] cluster. Glu-492 is a binding site for Mg(2+). The active-site Proton acceptor is the Ser-518.

Belongs to the IlvD/Edd family. As to quaternary structure, homodimer. The cofactor is [2Fe-2S] cluster. It depends on Mg(2+) as a cofactor.

The catalysed reaction is (2R)-2,3-dihydroxy-3-methylbutanoate = 3-methyl-2-oxobutanoate + H2O. It carries out the reaction (2R,3R)-2,3-dihydroxy-3-methylpentanoate = (S)-3-methyl-2-oxopentanoate + H2O. Its pathway is amino-acid biosynthesis; L-isoleucine biosynthesis; L-isoleucine from 2-oxobutanoate: step 3/4. It functions in the pathway amino-acid biosynthesis; L-valine biosynthesis; L-valine from pyruvate: step 3/4. In terms of biological role, functions in the biosynthesis of branched-chain amino acids. Catalyzes the dehydration of (2R,3R)-2,3-dihydroxy-3-methylpentanoate (2,3-dihydroxy-3-methylvalerate) into 2-oxo-3-methylpentanoate (2-oxo-3-methylvalerate) and of (2R)-2,3-dihydroxy-3-methylbutanoate (2,3-dihydroxyisovalerate) into 2-oxo-3-methylbutanoate (2-oxoisovalerate), the penultimate precursor to L-isoleucine and L-valine, respectively. The chain is Dihydroxy-acid dehydratase from Buchnera aphidicola subsp. Cinara cedri (strain Cc).